The primary structure comprises 170 residues: MIDGDGFRPNVGIVICNSHGQVFWAKRYGQHSWQFPQGGIDDGETPEQAMYRELYEEVGLTKNDVRILASSRHWLRYKLPKRLVRWDSKPVCIGQKQKWFLLRLECDESKVNMQRDRSPEFDGWRWVSYWYPVRQVVSFKRDVYRRALKEFAAIAMPFKERKFKRKGKKG.

The 144-residue stretch at 6–149 folds into the Nudix hydrolase domain; that stretch reads GFRPNVGIVI…KRDVYRRALK (144 aa). Positions 38-59 match the Nudix box motif; sequence GGIDDGETPEQAMYRELYEEVG.

It belongs to the Nudix hydrolase family. RppH subfamily. It depends on a divalent metal cation as a cofactor.

Functionally, accelerates the degradation of transcripts by removing pyrophosphate from the 5'-end of triphosphorylated RNA, leading to a more labile monophosphorylated state that can stimulate subsequent ribonuclease cleavage. This Aliivibrio salmonicida (strain LFI1238) (Vibrio salmonicida (strain LFI1238)) protein is RNA pyrophosphohydrolase.